The following is a 185-amino-acid chain: Elongation factor P (185 aa).

It belongs to the elongation factor P family.

The protein localises to the cytoplasm. It participates in protein biosynthesis; polypeptide chain elongation. Functionally, involved in peptide bond synthesis. Stimulates efficient translation and peptide-bond synthesis on native or reconstituted 70S ribosomes in vitro. Probably functions indirectly by altering the affinity of the ribosome for aminoacyl-tRNA, thus increasing their reactivity as acceptors for peptidyl transferase. This Bacillus velezensis (strain DSM 23117 / BGSC 10A6 / LMG 26770 / FZB42) (Bacillus amyloliquefaciens subsp. plantarum) protein is Elongation factor P.